We begin with the raw amino-acid sequence, 3946 residues long: Hybrid PKS-NRPS synthetase lepA (3946 aa).

Residues 9-440 (VEPIAIVGSA…GTNAHVILEG (432 aa)) enclose the Ketosynthase family 3 (KS3) domain. Active-site for beta-ketoacyl synthase activity residues include cysteine 183, histidine 320, and histidine 363. Positions 553-871 (IFTGQGAQWA…PYAGIMRRAT (319 aa)) are malonyl-CoA:ACP transacylase (MAT) domain. Residues 945 to 1073 (HELLGRRAPD…GRLILFKGEG (129 aa)) form an N-terminal hotdog fold region. Residues 945–1238 (HELLGRRAPD…RLQSFTEAKA (294 aa)) are dehydratase (DH) domain. The PKS/mFAS DH domain maps to 945 to 1239 (HELLGRRAPD…LQSFTEAKAL (295 aa)). Histidine 977 functions as the Proton acceptor; for dehydratase activity in the catalytic mechanism. Residues 1088 to 1239 (LSPLDREMFY…LQSFTEAKAL (152 aa)) are C-terminal hotdog fold. Aspartate 1147 (proton donor; for dehydratase activity) is an active-site residue. Positions 1380 to 1580 (LLNRFYTDGR…ATVSDLPSDG (201 aa)) are methyltransferase (MT) domain. The ketoreductase (KR) domain stretch occupies residues 2093 to 2266 (TYWMIGLNSE…AASVIDIGLV (174 aa)). The segment covering 2352 to 2365 (SSQDSDQSNSTSAS) has biased composition (low complexity). The interval 2352 to 2372 (SSQDSDQSNSTSASIRDQVSS) is disordered. In terms of domain architecture, Carrier 1 spans 2378 to 2455 (EGTDVLLRCF…EICAEAIQKF (78 aa)). Serine 2415 carries the post-translational modification O-(pantetheine 4'-phosphoryl)serine. Residues 2474–2531 (KQATASPPEIGREEAQSTSRAGILPTDQDNDNSSDSESQRKSGASSSSGSGTRTPTSI) are disordered. A compositionally biased stretch (low complexity) spans 2508-2530 (DSESQRKSGASSSSGSGTRTPTS). A condensation (C) domain region spans residues 2547–2976 (PMSYAQSRLW…MQIQDGLLND (430 aa)). The tract at residues 3000–3402 (FSQRAATDAN…GGLIFMGRLD (403 aa)) is adenylation (A) (KR) domain. Positions 3492–3511 (GKVDRKALQDKPLPTEPDSS) are disordered. A Carrier 2 domain is found at 3515–3594 (EALSLAEGEL…RMATLIDAEK (80 aa)). An O-(pantetheine 4'-phosphoryl)serine modification is found at serine 3554. Residues 3633 to 3833 (LTGSTGFLGM…RFSVLMKVVP (201 aa)) form a reductase (RED) domain region.

In the C-terminal section; belongs to the NRP synthetase family.

In terms of biological role, hybrid PKS-NRPS synthetase; part of the gene cluster 23 that mediates the biosynthesis of a family of 2-pyridones known as leporins. The hybrid PKS-NRPS synthetase lepA and the enoyl reductase lepG are responsible for fusion of phenylalanine with a hexaketide and subsequent release of the stable tetramic acid precursor, pre-leporin C. Because lepA lacks a designated enoylreductase (ER) domain, the required activity is provided the enoyl reductase lepG. It is possible that the dehydrogenase lepF also participates in production of pre-leporin C. Cytochrome P450 monooxygenase lepH is then required for the ring expansion step to yield leporin C. Leporin C is then presumably further oxidized by the N-hydroxylase lepD to form leporin B. LepI may possess a function in biosynthesis upstream of lepA. Leporin B is further oxidized in the presence of ferric ion to give the leporin B trimer-iron chelate, but whether or not this reaction is catalyzed by an enzyme in the pathway or by ferric ion is not determined yet. This is Hybrid PKS-NRPS synthetase lepA from Aspergillus flavus (strain ATCC 200026 / FGSC A1120 / IAM 13836 / NRRL 3357 / JCM 12722 / SRRC 167).